A 677-amino-acid polypeptide reads, in one-letter code: UvrABC system protein B (677 aa).

The Helicase ATP-binding domain maps to 25-412 (DGVNSGREYQ…SGAIIEQVIR (388 aa)). 38-45 (GATGTGKT) is a binding site for ATP. Residues 91 to 114 (YYDYYQPEAYVPVSDTYIAKTSSI) carry the Beta-hairpin motif. The Helicase C-terminal domain occupies 429-591 (QVEDLLDEIR…IVPMPAGKKA (163 aa)). Residues 639–674 (PQLIDELETKMKKSAKDLDFENAAKLRDKIHQLRKK) enclose the UVR domain.

Belongs to the UvrB family. Forms a heterotetramer with UvrA during the search for lesions. Interacts with UvrC in an incision complex.

The protein localises to the cytoplasm. The UvrABC repair system catalyzes the recognition and processing of DNA lesions. A damage recognition complex composed of 2 UvrA and 2 UvrB subunits scans DNA for abnormalities. Upon binding of the UvrA(2)B(2) complex to a putative damaged site, the DNA wraps around one UvrB monomer. DNA wrap is dependent on ATP binding by UvrB and probably causes local melting of the DNA helix, facilitating insertion of UvrB beta-hairpin between the DNA strands. Then UvrB probes one DNA strand for the presence of a lesion. If a lesion is found the UvrA subunits dissociate and the UvrB-DNA preincision complex is formed. This complex is subsequently bound by UvrC and the second UvrB is released. If no lesion is found, the DNA wraps around the other UvrB subunit that will check the other stand for damage. This chain is UvrABC system protein B, found in Prochlorococcus marinus (strain SARG / CCMP1375 / SS120).